We begin with the raw amino-acid sequence, 400 residues long: Homoserine O-acetyltransferase (400 aa).

Positions 1–22 (MMNVHPVKGPVATGGERPHEAD) are disordered. The 311-residue stretch at 64 to 374 (NAILVCHALT…DKGHDAFLLD (311 aa)) folds into the AB hydrolase-1 domain. Catalysis depends on Ser-169, which acts as the Nucleophile. Arg-239 provides a ligand contact to substrate. Active-site residues include Asp-335 and His-368. Residue Asp-369 participates in substrate binding.

Belongs to the AB hydrolase superfamily. MetX family. In terms of assembly, homodimer.

Its subcellular location is the cytoplasm. The enzyme catalyses L-homoserine + acetyl-CoA = O-acetyl-L-homoserine + CoA. It participates in amino-acid biosynthesis; L-methionine biosynthesis via de novo pathway; O-acetyl-L-homoserine from L-homoserine: step 1/1. In terms of biological role, transfers an acetyl group from acetyl-CoA to L-homoserine, forming acetyl-L-homoserine. This Rhodopseudomonas palustris (strain HaA2) protein is Homoserine O-acetyltransferase.